The following is a 207-amino-acid chain: Large ribosomal subunit protein uL4 (207 aa).

Residues 44–58 (RAPTRATRERSDVAR) show a composition bias toward basic and acidic residues. Positions 44 to 82 (RAPTRATRERSDVARSGKKFGRQKGGGTARHGDRRSPIF) are disordered.

Belongs to the universal ribosomal protein uL4 family. Part of the 50S ribosomal subunit.

In terms of biological role, one of the primary rRNA binding proteins, this protein initially binds near the 5'-end of the 23S rRNA. It is important during the early stages of 50S assembly. It makes multiple contacts with different domains of the 23S rRNA in the assembled 50S subunit and ribosome. Its function is as follows. Forms part of the polypeptide exit tunnel. This chain is Large ribosomal subunit protein uL4, found in Zymomonas mobilis subsp. mobilis (strain ATCC 31821 / ZM4 / CP4).